A 402-amino-acid polypeptide reads, in one-letter code: Protein kinase US3 homolog (402 aa).

2 disordered regions span residues M1–D21 and F46–T88. The Protein kinase domain occupies Y102–F386. Residues L108 to I116 and K129 each bind ATP. The Proton acceptor role is filled by D218.

This sequence belongs to the protein kinase superfamily. Ser/Thr protein kinase family. Post-translationally, phosphorylated by UL13 homolog; this phosphorylation regulates subsequent phosphorylation of UL31 and UL34 homologs by US3. Autophosphorylated.

Its subcellular location is the host cytoplasm. The protein localises to the host nucleus. The enzyme catalyses L-seryl-[protein] + ATP = O-phospho-L-seryl-[protein] + ADP + H(+). It carries out the reaction L-threonyl-[protein] + ATP = O-phospho-L-threonyl-[protein] + ADP + H(+). Multifunctional serine/threonine kinase that plays a role in several processes including egress of virus particles from the nucleus, modulation of the actin cytoskeleton and inhibition of apoptosis. Phosphorylates UL31 and UL34 homologs, two critical regulators of capsid budding from nucleus to endoplasmic reticulum, thereby facilitating virion egress. Modulates and redistributes host components of the nuclear envelope, including LMNA, emerin/EMD and the nuclear matrix protein MATR3. Phosphorylates envelope glycoprotein B (gB), probably to direct it to the cell surface. Promotes virus intracellular spread by restructuring host cell cytoskeleton. Blocks host apoptosis to extend cell survival and allow efficient viral replication. Promotes viral gene expression by phosphorylating host HDAC2 to reduce viral genome silencing. This Gallus gallus (Chicken) protein is Protein kinase US3 homolog (MDV092).